Consider the following 389-residue polypeptide: viridiflorene synthase Agr2 (389 aa).

The signal sequence occupies residues Met-1–Ala-15. Positions 128, 263, 267, and 271 each coordinate Mg(2+). The DDXXD motif motif lies at Asp-128 to Asp-132. (2E,6E)-farnesyl diphosphate is bound by residues Arg-360 and Tyr-361.

It belongs to the terpene synthase family. Mg(2+) serves as cofactor.

The catalysed reaction is (2E,6E)-farnesyl diphosphate = viridiflorene + diphosphate. Its function is as follows. Terpene cyclase that catalyzes the cyclization of farnesyl diphosphate (FPP) to viridiflorene. This is viridiflorene synthase Agr2 from Cyclocybe aegerita (Black poplar mushroom).